The primary structure comprises 202 residues: MPPRPRFDRRAPERELPNINERISYSSLRVVDSDGTQLGVISREDALEVAKERELDLVLVSEKATPPVCRIMNYGKFKFEQEKKAKEAKKKSHQTEVKEVKMRYKIDQHDYQVRISQATRFLKAGDKVKCTVIFRGREIQHTALAETLLKRMAKDLEEKAEVQQSPKREGRNMIMFLTPRKTPLLKKESEITEPKKALRTID.

This sequence belongs to the IF-3 family. In terms of assembly, monomer.

It is found in the cytoplasm. Its function is as follows. IF-3 binds to the 30S ribosomal subunit and shifts the equilibrium between 70S ribosomes and their 50S and 30S subunits in favor of the free subunits, thus enhancing the availability of 30S subunits on which protein synthesis initiation begins. The protein is Translation initiation factor IF-3 of Prochlorococcus marinus (strain NATL2A).